The primary structure comprises 187 residues: Large ribosomal subunit protein bL17 (187 aa).

Belongs to the bacterial ribosomal protein bL17 family. In terms of assembly, part of the 50S ribosomal subunit. Contacts protein L32.

In Rhodococcus opacus (strain B4), this protein is Large ribosomal subunit protein bL17.